Here is a 611-residue protein sequence, read N- to C-terminus: Rop guanine nucleotide exchange factor 5 (611 aa).

The tract at residues 1 to 62 (MENLVKSCAG…PPPPPSQILG (62 aa)) is disordered. Low complexity predominate over residues 34–51 (STSGASYESSSTTTVASS). A PRONE domain is found at 93–477 (FKAKEMNSAD…DLTKQSDDNN (385 aa)). 2 disordered regions span residues 513-541 (TTPG…TNKI) and 588-611 (DVEE…YTVS). A compositionally biased stretch (basic and acidic residues) spans 525 to 541 (KKGERRTPYSSKDTNKI).

In terms of biological role, guanine-nucleotide exchange factor (GEF) that acts as an activator of Rop (Rho of plants) GTPases by promoting the exchange of GDP for GTP. In Arabidopsis thaliana (Mouse-ear cress), this protein is Rop guanine nucleotide exchange factor 5 (ROPGEF5).